A 430-amino-acid polypeptide reads, in one-letter code: Septin-14 (430 aa).

One can recognise a Septin-type G domain in the interval 48-313; the sequence is KGFSFNILCV…ECYRSNRLQK (266 aa). The interval 58–65 is G1 motif; it reads GETGIGKT. GTP contacts are provided by residues 58–65, G113, 194–202, G246, and R261; these read GETGIGKT and KADSLSKND. The segment at 110-113 is G3 motif; it reads KTVG. Residues 193 to 196 form a G4 motif region; that stretch reads AKAD. A coiled-coil region spans residues 329–410; the sequence is QEMYEAKRRE…IIDFYKMKAA (82 aa). The segment at 367-430 is required for interaction with SEPTIN4. Required for migration of cortical neurons during corticogenesis; it reads DAEKELQDKF…NIKKDKDRKK (64 aa).

It belongs to the TRAFAC class TrmE-Era-EngA-EngB-Septin-like GTPase superfamily. Septin GTPase family. As to quaternary structure, septins polymerize into heterooligomeric protein complexes that form filaments, and can associate with cellular membranes, actin filaments and microtubules. GTPase activity is required for filament formation. Interacts with ACTN4. Interacts with SEPTIN9. Interacts (via C-terminus) with SEPTIN4. In terms of tissue distribution, expressed in the testis and brain including the cerebrum, hippocampus and cerebellum (at protein level).

The protein localises to the cytoplasm. Its subcellular location is the cytoskeleton. The protein resides in the cell projection. It localises to the axon. It is found in the dendrite. The protein localises to the perikaryon. Its subcellular location is the perinuclear region. The protein resides in the cytoplasmic vesicle. It localises to the secretory vesicle. It is found in the acrosome. Functionally, filament-forming cytoskeletal GTPase. Involved in the migration of cortical neurons and the formation of neuron leading processes during embryonic development. Plays a role in sperm head formation during spermiogenesis, potentially via facilitating localization of ACTN4 to cell filaments. The sequence is that of Septin-14 from Mus musculus (Mouse).